We begin with the raw amino-acid sequence, 536 residues long: Glucan 1,6-alpha-glucosidase (536 aa).

The active-site Nucleophile is the Asp194. Residue Glu236 is the Proton donor of the active site.

Belongs to the glycosyl hydrolase 13 family.

The protein localises to the cytoplasm. The catalysed reaction is Hydrolysis of (1-&gt;6)-alpha-D-glucosidic linkages in (1-&gt;6)-alpha-D-glucans and derived oligosaccharides.. The physiological substrates may be short isomaltosaccharides. The protein is Glucan 1,6-alpha-glucosidase (dexB) of Streptococcus mutans serotype c (strain ATCC 700610 / UA159).